Reading from the N-terminus, the 366-residue chain is Apolipoprotein A-V (366 aa).

The N-terminal stretch at 1–23 (MASMAAVLTWALALLSAFSATQA) is a signal peptide. Coiled-coil stretches lie at residues 54 to 157 (ATLK…VGED) and 236 to 262 (TLKA…RAFA). Thr55 is subject to Phosphothreonine; by FAM20C. The residue at position 59 (Ser59) is a Phosphoserine.

The protein belongs to the apolipoprotein A1/A4/E family. Interacts with GPIHBP1. Interacts with SORL1; this interaction leads to APOA5 internalization and sorting either to lysosomes and degradation, or to the trans-Golgi network. Post-translationally, phosphorylated by FAM20C in the extracellular medium. Liver and plasma.

It is found in the secreted. The protein resides in the early endosome. It localises to the late endosome. Its subcellular location is the golgi apparatus. The protein localises to the trans-Golgi network. Its function is as follows. Minor apolipoprotein mainly associated with HDL and to a lesser extent with VLDL. May also be associated with chylomicrons. Important determinant of plasma triglyceride (TG) levels by both being a potent stimulator of apo-CII lipoprotein lipase (LPL) TG hydrolysis and an inhibitor of the hepatic VLDL-TG production rate (without affecting the VLDL-apoB production rate). Activates poorly lecithin:cholesterol acyltransferase (LCAT) and does not enhance efflux of cholesterol from macrophages. Binds heparin. The sequence is that of Apolipoprotein A-V (APOA5) from Homo sapiens (Human).